A 405-amino-acid polypeptide reads, in one-letter code: Nodal homolog 2-A (405 aa).

Residues 1–18 (MASLGVILFFVIASLIHG) form the signal peptide. Positions 19 to 282 (KPIHSERKAA…RVTDTRRPRR (264 aa)) are excised as a propeptide. 3 N-linked (GlcNAc...) asparagine glycosylation sites follow: Asn-71, Asn-172, and Asn-343. 3 disulfides stabilise this stretch: Cys-305–Cys-371, Cys-334–Cys-402, and Cys-338–Cys-404.

The protein belongs to the TGF-beta family. As to quaternary structure, homodimer; disulfide-linked. Forms heterodimers with the TGF-beta family member derriere. Interacts with tsku; enhances nodal2 activity. In terms of tissue distribution, first localized to the vegetal region of the blastula. Just prior to gastrulation (stage 10), this expression disappears and instead becomes localized to the dorsal marginal zone, with enrichment in the organizer.

Its subcellular location is the secreted. Its function is as follows. Cooperation and regulatory loops of multiple nodals are essential for mesendoderm patterning in early embryos. Essential for mesoderm formation and axial patterning during embryonic development. Activates the activin-like signaling pathway to induce dorsal and ventral mesoderm in animal cap ectoderm. In addition, also dorsalizes ventral marginal zone (VMZ) tissues during gastrulation. Induces muscle actin. Appears to act as both a short-range and long-range morphogen. The unprocessed protein inhibits bmp- and wnt-signaling. The protein is Nodal homolog 2-A (nodal2-a) of Xenopus laevis (African clawed frog).